The chain runs to 1389 residues: DNA-directed RNA polymerase subunit beta' (1389 aa).

Zn(2+)-binding residues include cysteine 73, cysteine 75, cysteine 88, and cysteine 91. Mg(2+) contacts are provided by aspartate 464, aspartate 466, and aspartate 468. Residues cysteine 810, cysteine 884, cysteine 891, and cysteine 894 each coordinate Zn(2+).

Belongs to the RNA polymerase beta' chain family. In terms of assembly, the RNAP catalytic core consists of 2 alpha, 1 beta, 1 beta' and 1 omega subunit. When a sigma factor is associated with the core the holoenzyme is formed, which can initiate transcription. Requires Mg(2+) as cofactor. It depends on Zn(2+) as a cofactor.

It carries out the reaction RNA(n) + a ribonucleoside 5'-triphosphate = RNA(n+1) + diphosphate. DNA-dependent RNA polymerase catalyzes the transcription of DNA into RNA using the four ribonucleoside triphosphates as substrates. The chain is DNA-directed RNA polymerase subunit beta' from Pelagibacter ubique (strain HTCC1062).